Consider the following 421-residue polypeptide: ATP-dependent RNA helicase RhlB (421 aa).

The Q motif motif lies at 9–37 (QKFSDFALHPKVVEALEKKGFHNCTPIQA). Residues 40 to 219 (LPLTLAGRDV…FEQMNNAEYI (180 aa)) form the Helicase ATP-binding domain. Position 53–60 (53–60 (AQTGTGKT)) interacts with ATP. The DEAD box motif lies at 165 to 168 (DEAD). A Helicase C-terminal domain is found at 245–390 (RLLQTLIEEE…VSKYNPDALM (146 aa)). Residues 395–421 (KPLRLTRARTGNGPRRTGAPRNRRRSG) are disordered. Residues 402 to 414 (ARTGNGPRRTGAP) show a composition bias toward low complexity.

This sequence belongs to the DEAD box helicase family. RhlB subfamily. Component of the RNA degradosome, which is a multiprotein complex involved in RNA processing and mRNA degradation.

It localises to the cytoplasm. It catalyses the reaction ATP + H2O = ADP + phosphate + H(+). Its function is as follows. DEAD-box RNA helicase involved in RNA degradation. Has RNA-dependent ATPase activity and unwinds double-stranded RNA. This chain is ATP-dependent RNA helicase RhlB, found in Shigella flexneri serotype 5b (strain 8401).